Reading from the N-terminus, the 53-residue chain is ATP synthase protein 8 (53 aa).

Residues 4–24 (MAPISWLLLFIIFSITFILFC) form a helical membrane-spanning segment.

It belongs to the ATPase protein 8 family. F-type ATPases have 2 components, CF(1) - the catalytic core - and CF(0) - the membrane proton channel.

It localises to the mitochondrion membrane. In terms of biological role, mitochondrial membrane ATP synthase (F(1)F(0) ATP synthase or Complex V) produces ATP from ADP in the presence of a proton gradient across the membrane which is generated by electron transport complexes of the respiratory chain. F-type ATPases consist of two structural domains, F(1) - containing the extramembraneous catalytic core and F(0) - containing the membrane proton channel, linked together by a central stalk and a peripheral stalk. During catalysis, ATP synthesis in the catalytic domain of F(1) is coupled via a rotary mechanism of the central stalk subunits to proton translocation. Part of the complex F(0) domain. Minor subunit located with subunit a in the membrane. This is ATP synthase protein 8 (mt:ATPase8) from Drosophila mauritiana (Fruit fly).